A 182-amino-acid polypeptide reads, in one-letter code: Large ribosomal subunit protein uL6 (182 aa).

Belongs to the universal ribosomal protein uL6 family. In terms of assembly, part of the 50S ribosomal subunit.

Its function is as follows. This protein binds to the 23S rRNA, and is important in its secondary structure. It is located near the subunit interface in the base of the L7/L12 stalk, and near the tRNA binding site of the peptidyltransferase center. This chain is Large ribosomal subunit protein uL6, found in Methanococcus maripaludis (strain C5 / ATCC BAA-1333).